The sequence spans 433 residues: GTPase Obg (433 aa).

Positions 1–158 constitute an Obg domain; sequence MFVDQVKIYV…RNVILELKLL (158 aa). The region spanning 159–329 is the OBG-type G domain; it reads ADVGLVGFPS…LLFAIADLLE (171 aa). GTP is bound by residues 165–172, 190–194, 212–215, 282–285, and 310–312; these read GFPSVGKS, FTTLV, DLPG, NKMD, and SAA. Mg(2+) contacts are provided by Ser-172 and Thr-192. Residues 350 to 428 form the OCT domain; that stretch reads KYEKEELPFT…LLDYEFEFVD (79 aa).

It belongs to the TRAFAC class OBG-HflX-like GTPase superfamily. OBG GTPase family. Monomer. The cofactor is Mg(2+).

It localises to the cytoplasm. An essential GTPase which binds GTP, GDP and possibly (p)ppGpp with moderate affinity, with high nucleotide exchange rates and a fairly low GTP hydrolysis rate. Plays a role in control of the cell cycle, stress response, ribosome biogenesis and in those bacteria that undergo differentiation, in morphogenesis control. The polypeptide is GTPase Obg (Geobacillus thermodenitrificans (strain NG80-2)).